The sequence spans 492 residues: Gamma-aminobutyric acid receptor subunit alpha-3 (492 aa).

Positions 1–28 (MIITQTSHCYMTSLGILFLINILPGTTG) are cleaved as a signal peptide. The tract at residues 28 to 54 (GQGESRRQEPGDFVKQDIGGLSPKHAP) is disordered. Topologically, residues 29-274 (QGESRRQEPG…MTTHFHLKRK (246 aa)) are extracellular. Positions 31-42 (ESRRQEPGDFVK) are enriched in basic and acidic residues. Asn63 is a glycosylation site (N-linked (GlcNAc...) asparagine). Residue Arg119 participates in 4-aminobutanoate binding. N-linked (GlcNAc...) asparagine glycosylation is found at Asn163 and Asn176. Thr182 is a binding site for 4-aminobutanoate. The cysteines at positions 191 and 205 are disulfide-linked. Asn228 carries N-linked (GlcNAc...) asparagine glycosylation. A helical membrane pass occupies residues 275-295 (IGYFVIQTYLPCIMTVILSQV). At 296–305 (SFWLNRESVP) the chain is on the cytoplasmic side. Residues 306–325 (ARTVFGVTTVLTMTTLSISA) traverse the membrane as a helical segment. The Extracellular portion of the chain corresponds to 326–336 (RNSLPKVAYAT). A helical transmembrane segment spans residues 337–357 (AMDWFIAVCYAFVFSALIEFA). The Cytoplasmic segment spans residues 358–457 (TVNYFTKRSW…TYNSVSKVDK (100 aa)). Ser426 is modified (phosphoserine). Thr427 is subject to Phosphothreonine. A phosphoserine mark is found at Ser433 and Ser442. Residues 458–478 (ISRIIFPVLFAIFNLVYWATY) traverse the membrane as a helical segment. At 479 to 492 (VNRESAIKGMIRKQ) the chain is on the extracellular side.

This sequence belongs to the ligand-gated ion channel (TC 1.A.9) family. Gamma-aminobutyric acid receptor (TC 1.A.9.5) subfamily. GABRA3 sub-subfamily. In terms of assembly, heteropentamer, formed by a combination of alpha (GABRA1-6), beta (GABRB1-3), gamma (GABRG1-3), delta (GABRD), epsilon (GABRE), rho (GABRR1-3), pi (GABRP) and theta (GABRQ) chains, each subunit exhibiting distinct physiological and pharmacological properties. Binds UBQLN1. Interacts with GPHN.

The protein localises to the postsynaptic cell membrane. It localises to the cell membrane. The enzyme catalyses chloride(in) = chloride(out). Its activity is regulated as follows. Potentiated by etomidate, propofol, pregnanolone and flurazepam. Its function is as follows. Alpha subunit of the heteropentameric ligand-gated chloride channel gated by gamma-aminobutyric acid (GABA), a major inhibitory neurotransmitter in the brain. GABA-gated chloride channels, also named GABA(A) receptors (GABAAR), consist of five subunits arranged around a central pore and contain GABA active binding site(s) located at the alpha and beta subunit interface(s). When activated by GABA, GABAARs selectively allow the flow of chloride anions across the cell membrane down their electrochemical gradient. Chloride influx into the postsynaptic neuron following GABAAR opening decreases the neuron ability to generate a new action potential, thereby reducing nerve transmission. The sequence is that of Gamma-aminobutyric acid receptor subunit alpha-3 from Homo sapiens (Human).